The primary structure comprises 1580 residues: Endoribonuclease Dicer homolog 3 (1580 aa).

Positions 1 to 12 are enriched in basic and acidic residues; it reads MHSSLEPEKMEE. Residues 1–22 are disordered; that stretch reads MHSSLEPEKMEEGGGSNSLKRK. Residues 51–223 form the Helicase ATP-binding domain; sequence VYEVAKNRNI…SPSNYAAQVS (173 aa). 64 to 71 is a binding site for ATP; that stretch reads LGTGIDKS. The DECH box motif lies at 170 to 173; sequence DECH. Positions 394–562 constitute a Helicase C-terminal domain; that stretch reads KLKELFHLLD…SCPPPVKNGH (169 aa). Polar residues predominate over residues 581–597; that stretch reads EEAASTQTMSDPPSRNE. 2 disordered regions span residues 581-601 and 613-638; these read EEAASTQTMSDPPSRNEQLPP and QSNGKEKVASSKSKSSSSAAGSKKRK. Positions 622–633 are enriched in low complexity; it reads SSKSKSSSSAAG. The PAZ domain maps to 836–960; sequence NLIHFANASS…LPPELLARID (125 aa). RNase III domains lie at 985–1157 and 1198–1340; these read ASQL…VSGG and LIEL…IDTR. 3 residues coordinate Mg(2+): Glu1234, Asp1326, and Glu1329.

The protein belongs to the helicase family. Dicer subfamily. As to quaternary structure, interacts with DRB2 and DRB5. The cofactor is Mg(2+). Mn(2+) serves as cofactor.

The protein resides in the nucleus. It localises to the nucleolus. Functionally, ribonuclease (RNase) III involved in RNA-mediated post-transcriptional gene silencing (PTGS). Involved in the processing of repeat-associated small interfering RNAs (ra-siRNAs, derived from heterochromatin and DNA repeats such as transposons) by cleaving small dsRNAs into 24 nucleotide ra-siRNAs. Plays a role in antiviral RNA silencing. Involved in the production of viral siRNAs derived from the cabbage leaf curl virus (CaLCuV) and tobacco rattle virus (TRV). Targeted by the viral silencing suppressor (VSR) protein 2b of the cucumber mosaic virus (CMV) that inactivates DCL3 function in RNA silencing. Acts redundantly with DICER-LIKE 1 (DCL1) to promote flowering via repression of FLOWERING LOCUS C (FLC). Does not seem to be involved in microRNAs (miRNAs) processing. This is Endoribonuclease Dicer homolog 3 (DCL3) from Arabidopsis thaliana (Mouse-ear cress).